Consider the following 815-residue polypeptide: Probable inorganic carbon transporter subunit DabA (815 aa).

Residues Cys334, Asp336, His507, and Cys522 each contribute to the Zn(2+) site.

This sequence belongs to the inorganic carbon transporter (TC 9.A.2) DabA family. In terms of assembly, forms a complex with DabB. Requires Zn(2+) as cofactor.

The protein resides in the cell inner membrane. Its function is as follows. Part of an energy-coupled inorganic carbon pump. This Ectopseudomonas mendocina (strain ymp) (Pseudomonas mendocina) protein is Probable inorganic carbon transporter subunit DabA.